Here is a 732-residue protein sequence, read N- to C-terminus: Acylamino-acid-releasing enzyme (732 aa).

Met1 carries the N-acetylmethionine modification. Phosphoserine occurs at positions 185 and 187. Catalysis depends on charge relay system residues Ser587, Asp675, and His707.

It belongs to the peptidase S9C family. In terms of assembly, homotetramer.

The protein localises to the cytoplasm. The enzyme catalyses Cleavage of an N-acetyl or N-formyl amino acid from the N-terminus of a polypeptide.. Its activity is regulated as follows. Homotetramerization is required for activity. Tetramerization results in the formation of a gated channel which is involved in substrate selection and substrate access to the catalytic sites. Functionally, this enzyme catalyzes the hydrolysis of the N-terminal peptide bond of an N-acetylated peptide to generate an N-acetylated amino acid and a peptide with a free N-terminus. It preferentially cleaves off Ac-Ala, Ac-Met and Ac-Ser. Also, involved in the degradation of oxidized and glycated proteins. The polypeptide is Acylamino-acid-releasing enzyme (Apeh) (Mus musculus (Mouse)).